Here is a 1361-residue protein sequence, read N- to C-terminus: DNA-directed RNA polymerase subunit beta (1361 aa).

Belongs to the RNA polymerase beta chain family. In terms of assembly, the RNAP catalytic core consists of 2 alpha, 1 beta, 1 beta' and 1 omega subunit. When a sigma factor is associated with the core the holoenzyme is formed, which can initiate transcription.

The catalysed reaction is RNA(n) + a ribonucleoside 5'-triphosphate = RNA(n+1) + diphosphate. Its function is as follows. DNA-dependent RNA polymerase catalyzes the transcription of DNA into RNA using the four ribonucleoside triphosphates as substrates. This chain is DNA-directed RNA polymerase subunit beta, found in Dichelobacter nodosus (strain VCS1703A).